We begin with the raw amino-acid sequence, 161 residues long: uncharacterized protein (161 aa).

The N-terminal stretch at 1–27 (MKKIGLLFMLCLAALFTIGFPAQQADA) is a signal peptide.

The protein localises to the secreted. This is an uncharacterized protein from Bacillus subtilis (strain 168).